We begin with the raw amino-acid sequence, 139 residues long: Large-conductance mechanosensitive channel (139 aa).

Transmembrane regions (helical) follow at residues 16–36, 40–60, and 79–99; these read VIDLAVGVIIGAAFNDIVKAL, IVMPPIGLVLSGIDFSDLAWV, and GAFINTCIRFLIVAWAVFMLV.

This sequence belongs to the MscL family. Homopentamer.

The protein localises to the cell inner membrane. Channel that opens in response to stretch forces in the membrane lipid bilayer. May participate in the regulation of osmotic pressure changes within the cell. The protein is Large-conductance mechanosensitive channel of Phenylobacterium zucineum (strain HLK1).